A 164-amino-acid polypeptide reads, in one-letter code: Ribonuclease P protein component 2 (164 aa).

It belongs to the eukaryotic/archaeal RNase P protein component 2 family. As to quaternary structure, consists of a catalytic RNA component and at least 4-5 protein subunits.

The protein resides in the cytoplasm. The catalysed reaction is Endonucleolytic cleavage of RNA, removing 5'-extranucleotides from tRNA precursor.. Functionally, part of ribonuclease P, a protein complex that generates mature tRNA molecules by cleaving their 5'-ends. The chain is Ribonuclease P protein component 2 from Halobacterium salinarum (strain ATCC 29341 / DSM 671 / R1).